We begin with the raw amino-acid sequence, 297 residues long: MLITPEKLYKQRRNFLKLGAGALISSSVLASKLSALNFTSDTNPNKLEISDEELATNYVNFYEFSTDKRKAVSLAQNFNTQNWKIDISGEIEKPLTLSMEDILKFPLEERIYRFRCVETWSMVVPWVGFELRRLIEMAKPTSEAKFVKFTTLLDKSQFPDQDALFPTIDYPYVEGLRMDEAMHPLTLLAVGMYKKALKPQNGAPIRLVVPWKYGFKSIKSIVKIEFTKEQPKSTWESYAPSEYGFYANVNPNVSHPRWSQANERALGDFFTKPTLMFNGYEKEVASLYKNMDLKVNF.

Positions 1–35 (MLITPEKLYKQRRNFLKLGAGALISSSVLASKLSA) form a signal peptide, tat-type signal. Mo-molybdopterin is bound by residues 62–63 (YE), cysteine 116, threonine 151, asparagine 201, arginine 206, and 217–219 (SIK).

The protein belongs to the MsrP family. As to quaternary structure, heterodimer of a catalytic subunit (MsrP) and a heme-binding subunit (MsrQ). It depends on Mo-molybdopterin as a cofactor. In terms of processing, predicted to be exported by the Tat system. The position of the signal peptide cleavage has not been experimentally proven.

The protein resides in the periplasm. The enzyme catalyses L-methionyl-[protein] + a quinone + H2O = L-methionyl-(S)-S-oxide-[protein] + a quinol. The catalysed reaction is L-methionyl-[protein] + a quinone + H2O = L-methionyl-(R)-S-oxide-[protein] + a quinol. Its function is as follows. Part of the MsrPQ system that repairs oxidized periplasmic proteins containing methionine sulfoxide residues (Met-O), using respiratory chain electrons. Thus protects these proteins from oxidative-stress damage caused by reactive species of oxygen and chlorine generated by the host defense mechanisms. MsrPQ is essential for the maintenance of envelope integrity under bleach stress, rescuing a wide series of structurally unrelated periplasmic proteins from methionine oxidation. The catalytic subunit MsrP is non-stereospecific, being able to reduce both (R-) and (S-) diastereoisomers of methionine sulfoxide. The sequence is that of Protein-methionine-sulfoxide reductase catalytic subunit MsrP from Campylobacter jejuni subsp. jejuni serotype O:2 (strain ATCC 700819 / NCTC 11168).